Here is a 73-residue protein sequence, read N- to C-terminus: Protein SlyX homolog (73 aa).

Belongs to the SlyX family.

The protein is Protein SlyX homolog of Histophilus somni (strain 2336) (Haemophilus somnus).